Consider the following 98-residue polypeptide: NADH-ubiquinone oxidoreductase chain 4L (98 aa).

Transmembrane regions (helical) follow at residues 1-21 (MPYI…GTLM), 29-49 (SLLC…LLSL), and 61-81 (LILL…LVMI).

This sequence belongs to the complex I subunit 4L family. As to quaternary structure, core subunit of respiratory chain NADH dehydrogenase (Complex I) which is composed of 45 different subunits.

The protein resides in the mitochondrion inner membrane. The enzyme catalyses a ubiquinone + NADH + 5 H(+)(in) = a ubiquinol + NAD(+) + 4 H(+)(out). Core subunit of the mitochondrial membrane respiratory chain NADH dehydrogenase (Complex I) which catalyzes electron transfer from NADH through the respiratory chain, using ubiquinone as an electron acceptor. Part of the enzyme membrane arm which is embedded in the lipid bilayer and involved in proton translocation. This Elephas maximus (Indian elephant) protein is NADH-ubiquinone oxidoreductase chain 4L (MT-ND4L).